The chain runs to 185 residues: MKNVTDSFVYLVGHCPFAGSFAFNTDILATNPINLSIVLGVLIFFGKGVLNDLLDNRKQRILSTIQNSEELRKKTIEQLERARDRLRKVEIEADEYRINGYSEIEREKTNLINATYDSLERLENYKNETLHFEQQRAINKVRQRVFQEALQGALGTLNSCLNSDLHFRTISANIGILGAMEEITD.

Residues 7–29 form a helical membrane-spanning segment; that stretch reads SFVYLVGHCPFAGSFAFNTDILA.

This sequence belongs to the ATPase B chain family. F-type ATPases have 2 components, F(1) - the catalytic core - and F(0) - the membrane proton channel. F(1) has five subunits: alpha(3), beta(3), gamma(1), delta(1), epsilon(1). F(0) has four main subunits: a(1), b(1), b'(1) and c(10-14). The alpha and beta chains form an alternating ring which encloses part of the gamma chain. F(1) is attached to F(0) by a central stalk formed by the gamma and epsilon chains, while a peripheral stalk is formed by the delta, b and b' chains.

The protein localises to the plastid. It is found in the chloroplast thylakoid membrane. Functionally, f(1)F(0) ATP synthase produces ATP from ADP in the presence of a proton or sodium gradient. F-type ATPases consist of two structural domains, F(1) containing the extramembraneous catalytic core and F(0) containing the membrane proton channel, linked together by a central stalk and a peripheral stalk. During catalysis, ATP synthesis in the catalytic domain of F(1) is coupled via a rotary mechanism of the central stalk subunits to proton translocation. In terms of biological role, component of the F(0) channel, it forms part of the peripheral stalk, linking F(1) to F(0). This is ATP synthase subunit b, chloroplastic from Dioscorea elephantipes (Elephant's foot yam).